Here is a 419-residue protein sequence, read N- to C-terminus: MFDKSQTLAKVDAEIYKAIVLEETRQETHIELIASENYTSPAVMETQGSKLTNKYAEGYPCKRYYGGCEYVDMVEQLAIDRAKTLFGADYANVQPHSGSQANAAVFQALLVPGDTILGMSLAHGGHLTHGATPSFSGKNFNSIQYGLNQKTGEIDYEQVEVLAKRYKPKMIIAGFSAYSRMVDWQRFREIADSVGAYLMVDMAHVAGLIATGEYPSPVAIADVTTTTTHKTLRGPRGGLILAKSNKTIEKKLNAAIFPGIQGGPLMHIIAAKAVSFKEAMSDEYKTYQKQVKINAQVMANTFIKRGFDVVSGGTDNHLFLVSFIDQGLTGKAVDTALGSAYITVNMNAVPNDPNPPFVTSGIRVGTPSVTTRGFNEIDCSDLASWMCDICDDLGNQEVIYKIRGRVVSLCAKYPVYLDD.

(6S)-5,6,7,8-tetrahydrofolate contacts are provided by residues Leu-121 and 125-127; that span reads GHL. Lys-230 is modified (N6-(pyridoxal phosphate)lysine).

It belongs to the SHMT family. Homodimer. It depends on pyridoxal 5'-phosphate as a cofactor.

It localises to the cytoplasm. The enzyme catalyses (6R)-5,10-methylene-5,6,7,8-tetrahydrofolate + glycine + H2O = (6S)-5,6,7,8-tetrahydrofolate + L-serine. It functions in the pathway one-carbon metabolism; tetrahydrofolate interconversion. It participates in amino-acid biosynthesis; glycine biosynthesis; glycine from L-serine: step 1/1. Catalyzes the reversible interconversion of serine and glycine with tetrahydrofolate (THF) serving as the one-carbon carrier. This reaction serves as the major source of one-carbon groups required for the biosynthesis of purines, thymidylate, methionine, and other important biomolecules. Also exhibits THF-independent aldolase activity toward beta-hydroxyamino acids, producing glycine and aldehydes, via a retro-aldol mechanism. This Vesicomyosocius okutanii subsp. Calyptogena okutanii (strain HA) protein is Serine hydroxymethyltransferase.